The primary structure comprises 170 residues: Large ribosomal subunit protein uL11 (170 aa).

This sequence belongs to the universal ribosomal protein uL11 family. In terms of assembly, part of the ribosomal stalk of the 50S ribosomal subunit. Interacts with L10 and the large rRNA to form the base of the stalk. L10 forms an elongated spine to which L12 dimers bind in a sequential fashion forming a multimeric L10(L12)X complex.

Functionally, forms part of the ribosomal stalk which helps the ribosome interact with GTP-bound translation factors. The protein is Large ribosomal subunit protein uL11 of Saccharolobus islandicus (strain M.16.27) (Sulfolobus islandicus).